Here is a 196-residue protein sequence, read N- to C-terminus: Large ribosomal subunit protein bL20 (196 aa).

It belongs to the bacterial ribosomal protein bL20 family.

Its function is as follows. Binds directly to 23S ribosomal RNA and is necessary for the in vitro assembly process of the 50S ribosomal subunit. It is not involved in the protein synthesizing functions of that subunit. This Oenococcus oeni (strain ATCC BAA-331 / PSU-1) protein is Large ribosomal subunit protein bL20 (rplT).